We begin with the raw amino-acid sequence, 348 residues long: Protein RecA (348 aa).

65–72 is a binding site for ATP; that stretch reads GPESSGKT.

This sequence belongs to the RecA family.

The protein resides in the cytoplasm. Its function is as follows. Can catalyze the hydrolysis of ATP in the presence of single-stranded DNA, the ATP-dependent uptake of single-stranded DNA by duplex DNA, and the ATP-dependent hybridization of homologous single-stranded DNAs. It interacts with LexA causing its activation and leading to its autocatalytic cleavage. This Enterococcus faecalis (strain ATCC 700802 / V583) protein is Protein RecA.